The following is a 121-amino-acid chain: Ribonuclease P protein component (121 aa).

The protein belongs to the RnpA family. Consists of a catalytic RNA component (M1 or rnpB) and a protein subunit.

It catalyses the reaction Endonucleolytic cleavage of RNA, removing 5'-extranucleotides from tRNA precursor.. In terms of biological role, RNaseP catalyzes the removal of the 5'-leader sequence from pre-tRNA to produce the mature 5'-terminus. It can also cleave other RNA substrates such as 4.5S RNA. The protein component plays an auxiliary but essential role in vivo by binding to the 5'-leader sequence and broadening the substrate specificity of the ribozyme. This Erythrobacter litoralis (strain HTCC2594) protein is Ribonuclease P protein component.